The chain runs to 220 residues: Aspartic protease inhibitor 2 (220 aa).

The N-terminal stretch at 1–23 (MMKCLFLLCLCLLPIVVFSSTFT) is a signal peptide. The propeptide occupies 24 to 32 (SQNLIDLPS). A Vacuolar targeting signal motif is present at residues 26 to 31 (NLIDLP). Asn51 carries an N-linked (GlcNAc...) asparagine glycan. Intrachain disulfides connect Cys80–Cys125 and Cys174–Cys185.

The protein belongs to the protease inhibitor I3 (leguminous Kunitz-type inhibitor) family. In terms of tissue distribution, tubers.

The protein resides in the vacuole. Its function is as follows. Inhibitor of cathepsin D (aspartic protease). May also inhibit trypsin and chymotrypsin (serine proteases). Protects the plant by inhibiting proteases of invading organisms. The sequence is that of Aspartic protease inhibitor 2 from Solanum tuberosum (Potato).